We begin with the raw amino-acid sequence, 78 residues long: Non-structural protein 7 (78 aa).

The first 23 residues, 1-23 (MLVFLHAVFITVLILLLIGRLQL), serve as a signal peptide directing secretion. Residues 24-57 (LERLLLNHSFNLKTVNDFNILYRSLAETRLLKVV) lie on the Lumenal side of the membrane. The chain crosses the membrane as a helical span at residues 58 to 78 (LRVIFLVLLGFCCYRLLVTLM). The tract at residues 59 to 65 (RVIFLVL) is interaction with PPP1CC/PP1-gamma.

This sequence belongs to the coronaviruses ns7/ns7a protein family. In terms of assembly, interacts with serine/threonine-protein phosphatase PPP1CC/PP1-gamma; this interaction; this interaction probably promotes EIF2S1/eIF-2alpha dephosphorylation.

The protein localises to the host membrane. In terms of biological role, inhibits the integrated stress response (ISR) in the infected cell by promoting EIF2S1/eIF-2alpha dephosphorylation. Acts as a functional homolog of host PPP1R15A/GADD34 to recruit PP1 phosphatase and dephosphorylate host EIF2S1/eIF-2alpha. May function in the formation of membrane-bound replication complexes or in the assembly of the virus. This is Non-structural protein 7 from Porcine transmissible gastroenteritis coronavirus (strain Purdue) (TGEV).